A 242-amino-acid chain; its full sequence is Probable transcriptional regulatory protein NMA1902 (242 aa).

It belongs to the TACO1 family.

The protein resides in the cytoplasm. This is Probable transcriptional regulatory protein NMA1902 from Neisseria meningitidis serogroup A / serotype 4A (strain DSM 15465 / Z2491).